Here is a 433-residue protein sequence, read N- to C-terminus: O-methyltransferase aclM (433 aa).

Positions 5–37 (LTDAERTALQTSLEALNRQVEATRNILRSNSQK) form a coiled coil. Residues aspartate 277 and 311-313 (GDF) contribute to the S-adenosyl-L-methionine site. Histidine 330 functions as the Proton acceptor in the catalytic mechanism.

This sequence belongs to the class I-like SAM-binding methyltransferase superfamily. Cation-independent O-methyltransferase family. COMT subfamily.

Its pathway is mycotoxin biosynthesis. O-methyltransferase; part of the gene cluster that mediates the biosynthesis of aspirochlorine (or antibiotic A30641), an unusual halogenated spiro compound with distinctive antifungal properties due to selective inhibition of protein biosynthesis, and which is also active against bacteria, viruses, and murine tumor cells. The non-ribosomal peptide synthetase (NRPS) aclP is responsible the formation of the diketopiperazine (DKP) core from the condensation of 2 phenylalanine residues. One Phe residue is tailored into chlorotyrosine by hydroxylation and chlorination, whereas the second Phe undergoes an unprecedented C-C bond cleavage to be converted into glycine. After formation of the DKP, sulfur is incorporated into the DKP by conjugation with glutathione by aclG, followed by its stepwise degradation to the thiol by aclI, aclJ and aclK, and the dithiol oxidation by aclT. In addition, oxygenases (aclB, aclC, aclL and aclO) and O-methyltransferases (aclM and aclU) act as tailoring enzymes to produce the intermediate dechloroaspirochlorine. Ultimately, chlorination of dechloroaspirochlorine by the halogenase aclH is the last step in the aspirochlorine pathway. The sequence is that of O-methyltransferase aclM from Aspergillus oryzae (strain ATCC 42149 / RIB 40) (Yellow koji mold).